Reading from the N-terminus, the 297-residue chain is N-acetylmuramic acid 6-phosphate etherase (297 aa).

Positions A55–K218 constitute an SIS domain. The Proton donor role is filled by E83. The active site involves E114.

It belongs to the GCKR-like family. MurNAc-6-P etherase subfamily. In terms of assembly, homodimer.

The enzyme catalyses N-acetyl-D-muramate 6-phosphate + H2O = N-acetyl-D-glucosamine 6-phosphate + (R)-lactate. It participates in amino-sugar metabolism; 1,6-anhydro-N-acetylmuramate degradation. Its pathway is amino-sugar metabolism; N-acetylmuramate degradation. The protein operates within cell wall biogenesis; peptidoglycan recycling. Its function is as follows. Specifically catalyzes the cleavage of the D-lactyl ether substituent of MurNAc 6-phosphate, producing GlcNAc 6-phosphate and D-lactate. Together with AnmK, is also required for the utilization of anhydro-N-acetylmuramic acid (anhMurNAc) either imported from the medium or derived from its own cell wall murein, and thus plays a role in cell wall recycling. The chain is N-acetylmuramic acid 6-phosphate etherase from Salmonella dublin (strain CT_02021853).